The primary structure comprises 594 residues: Ferredoxin--nitrite reductase, chloroplastic (594 aa).

Residues 1 to 32 constitute a chloroplast transit peptide; sequence MASLPVNKIIPSSTTLLSSSNNNRRRNNSSIR. The span at 13 to 22 shows a compositional bias: low complexity; the sequence is STTLLSSSNN. Positions 13–36 are disordered; sequence STTLLSSSNNNRRRNNSSIRCQKA. Residues C473, C479, C514, and C518 each contribute to the [4Fe-4S] cluster site. C518 serves as a coordination point for siroheme.

It belongs to the nitrite and sulfite reductase 4Fe-4S domain family. In terms of assembly, monomer. The cofactor is siroheme. [4Fe-4S] cluster is required as a cofactor.

The protein resides in the plastid. The protein localises to the chloroplast. The enzyme catalyses 6 oxidized [2Fe-2S]-[ferredoxin] + NH4(+) + 2 H2O = nitrite + 6 reduced [2Fe-2S]-[ferredoxin] + 8 H(+). Its pathway is nitrogen metabolism; nitrate reduction (assimilation). This chain is Ferredoxin--nitrite reductase, chloroplastic (NIR), found in Spinacia oleracea (Spinach).